The following is a 1049-amino-acid chain: Protein argonaute 12 (1049 aa).

The span at Met1–Gly53 shows a compositional bias: gly residues. Disordered regions lie at residues Met1 to Val101 and Gly144 to Thr192. The segment covering Ala54–Arg65 has biased composition (basic and acidic residues). Positions Gly66 to Ala76 are enriched in gly residues. Low complexity predominate over residues Gly144–Gly160. The PAZ domain occupies Pro404–Glu515. The region spanning Leu694–Glu1012 is the Piwi domain.

The protein belongs to the argonaute family. Ago subfamily.

Its function is as follows. Probably involved in the RNA silencing pathway. May bind to short RNAs such as microRNAs (miRNAs) or short interfering RNAs (siRNAs), and represses the translation of mRNAs which are complementary to them. The protein is Protein argonaute 12 (AGO12) of Oryza sativa subsp. japonica (Rice).